The sequence spans 464 residues: Protein FAM90A1 (464 aa).

Disordered stretches follow at residues 1-43 (MMAR…PRLK), 71-294 (PNFG…KRSA), 312-386 (PFQI…AASH), 412-437 (PSFHSPEKPGAFLAQSPHVSEKSEGP), and 445-464 (VLYEDLQVPSSSEDSDSDLE). 2 stretches are compositionally biased toward basic and acidic residues: residues 74 to 83 (GEKEGKENLK) and 97 to 114 (NKDKGEKEERPRPQDPQR). Residues 180–197 (LASLSPLRKASLSSSSSL) are compositionally biased toward low complexity. Residues 344 to 355 (TSPQTGTRTPAQ) are compositionally biased toward polar residues.

This sequence belongs to the FAM90 family.

This chain is Protein FAM90A1 (FAM90A1), found in Homo sapiens (Human).